Consider the following 590-residue polypeptide: Aspartate--tRNA(Asp/Asn) ligase (590 aa).

Glutamate 176 is an L-aspartate binding site. The aspartate stretch occupies residues 200 to 203; it reads QLFK. L-aspartate contacts are provided by arginine 222 and histidine 451. 222-224 is a binding site for ATP; that stretch reads RDE. Glutamate 485 contacts ATP. Arginine 492 serves as a coordination point for L-aspartate. 537 to 540 is an ATP binding site; sequence GIDR.

The protein belongs to the class-II aminoacyl-tRNA synthetase family. Type 1 subfamily. In terms of assembly, homodimer.

It is found in the cytoplasm. The catalysed reaction is tRNA(Asx) + L-aspartate + ATP = L-aspartyl-tRNA(Asx) + AMP + diphosphate. Aspartyl-tRNA synthetase with relaxed tRNA specificity since it is able to aspartylate not only its cognate tRNA(Asp) but also tRNA(Asn). Reaction proceeds in two steps: L-aspartate is first activated by ATP to form Asp-AMP and then transferred to the acceptor end of tRNA(Asp/Asn). The chain is Aspartate--tRNA(Asp/Asn) ligase from Ehrlichia canis (strain Jake).